The following is a 295-amino-acid chain: Nucleotide-binding protein CMS1991 (295 aa).

19 to 26 provides a ligand contact to ATP; that stretch reads GMSGAGRS. 70–73 is a GTP binding site; that stretch reads DVRG.

It belongs to the RapZ-like family.

In terms of biological role, displays ATPase and GTPase activities. This is Nucleotide-binding protein CMS1991 from Clavibacter sepedonicus (Clavibacter michiganensis subsp. sepedonicus).